A 78-amino-acid polypeptide reads, in one-letter code: Mambalgin-1 (78 aa).

An N-terminal signal peptide occupies residues 1–21 (MKTLLLTLLVVTIVCLDLGYS). Cystine bridges form between Cys-24-Cys-40, Cys-33-Cys-58, Cys-62-Cys-70, and Cys-71-Cys-76.

It belongs to the three-finger toxin family. Short-chain subfamily. Mambalgin sub-subfamily. Expressed by the venom gland.

The protein localises to the secreted. Its function is as follows. This three-finger toxin inhibits ASIC channels. It acts as a gating modifier toxin by decreasing the apparent proton sensitivity of activation and by slightly increasing the apparent proton sensitivity for inactivation. It binds more tightly to the closed state and to a much lesser extent the inactivated/desensitized state of ASIC1a isoform of ASIC1. It interacts directly with the outside surface of the thumb domain of chicken ASIC1a (ASIC1a), but does not insert into the acidic pocket as suggested for mambalgin-2. This binding leads to relocation of the thumb domain that could disrupt the acidic pocket of cASIC1a. It reversibly inhibits rat ASIC1a (IC(50)=3.4-55 nM), rat ASIC1a-ASIC2b (IC(50)=61 nM), rat ASIC1a-ASIC1b (IC(50)=72 nM), human ASIC1a (IC(50)=127-580 nM), chicken ASIC1a (IC(50)=123.6 nM), rat ASIC1b (IC(50)=22.2-203 nM), rat ASIC1a-ASIC2a (IC(50)=152-252 nM). In vivo, it shows a potent naloxone-resistant analgesic effect against acute and inflammatory pain upon central and peripheral injection. In addition, it also has an opioid-independent effect on both thermal and mechanical inflammatory pain after systemic administration and is effective against neuropathic pain. In Dendroaspis polylepis polylepis (Black mamba), this protein is Mambalgin-1.